The primary structure comprises 156 residues: Large ribosomal subunit protein uL15 (156 aa).

Positions 1-13 are enriched in basic and acidic residues; it reads MKLNEIKDNEGAT. The interval 1 to 41 is disordered; the sequence is MKLNEIKDNEGATKNRKRLGRGIGSGSGKTAGRGVKGQKAR. The segment covering 21-35 has biased composition (gly residues); sequence RGIGSGSGKTAGRGV.

It belongs to the universal ribosomal protein uL15 family. In terms of assembly, part of the 50S ribosomal subunit.

Its function is as follows. Binds to the 23S rRNA. In Sinorhizobium medicae (strain WSM419) (Ensifer medicae), this protein is Large ribosomal subunit protein uL15.